Consider the following 346-residue polypeptide: Histidinol-phosphate aminotransferase (346 aa).

At K209 the chain carries N6-(pyridoxal phosphate)lysine.

Belongs to the class-II pyridoxal-phosphate-dependent aminotransferase family. Histidinol-phosphate aminotransferase subfamily. As to quaternary structure, homodimer. Requires pyridoxal 5'-phosphate as cofactor.

It carries out the reaction L-histidinol phosphate + 2-oxoglutarate = 3-(imidazol-4-yl)-2-oxopropyl phosphate + L-glutamate. It functions in the pathway amino-acid biosynthesis; L-histidine biosynthesis; L-histidine from 5-phospho-alpha-D-ribose 1-diphosphate: step 7/9. The sequence is that of Histidinol-phosphate aminotransferase from Vibrio cholerae serotype O1 (strain ATCC 39315 / El Tor Inaba N16961).